The primary structure comprises 176 residues: Negative modulator of initiation of replication (176 aa).

Belongs to the SeqA family. Homodimer. Polymerizes to form helical filaments.

It localises to the cytoplasm. In terms of biological role, negative regulator of replication initiation, which contributes to regulation of DNA replication and ensures that replication initiation occurs exactly once per chromosome per cell cycle. Binds to pairs of hemimethylated GATC sequences in the oriC region, thus preventing assembly of replication proteins and re-initiation at newly replicated origins. Repression is relieved when the region becomes fully methylated. This Hamiltonella defensa subsp. Acyrthosiphon pisum (strain 5AT) protein is Negative modulator of initiation of replication.